A 444-amino-acid chain; its full sequence is Phosphoglucosamine mutase (444 aa).

The Phosphoserine intermediate role is filled by Ser102. Residues Ser102, Asp241, Asp243, and Asp245 each contribute to the Mg(2+) site. Ser102 carries the phosphoserine modification.

Belongs to the phosphohexose mutase family. Mg(2+) is required as a cofactor. In terms of processing, activated by phosphorylation.

The catalysed reaction is alpha-D-glucosamine 1-phosphate = D-glucosamine 6-phosphate. Catalyzes the conversion of glucosamine-6-phosphate to glucosamine-1-phosphate. This is Phosphoglucosamine mutase from Buchnera aphidicola subsp. Acyrthosiphon pisum (strain 5A).